A 386-amino-acid chain; its full sequence is Lipoyl synthase, mitochondrial (386 aa).

Residues Cys115, Cys120, Cys126, Cys146, Cys150, Cys153, and Ser362 each coordinate [4Fe-4S] cluster. Residues 131–351 (ETGTATATIM…QKLGMEMGFR (221 aa)) form the Radical SAM core domain.

The protein belongs to the radical SAM superfamily. Lipoyl synthase family. It depends on [4Fe-4S] cluster as a cofactor.

Its subcellular location is the mitochondrion. It catalyses the reaction [[Fe-S] cluster scaffold protein carrying a second [4Fe-4S](2+) cluster] + N(6)-octanoyl-L-lysyl-[protein] + 2 oxidized [2Fe-2S]-[ferredoxin] + 2 S-adenosyl-L-methionine + 4 H(+) = [[Fe-S] cluster scaffold protein] + N(6)-[(R)-dihydrolipoyl]-L-lysyl-[protein] + 4 Fe(3+) + 2 hydrogen sulfide + 2 5'-deoxyadenosine + 2 L-methionine + 2 reduced [2Fe-2S]-[ferredoxin]. It functions in the pathway protein modification; protein lipoylation via endogenous pathway; protein N(6)-(lipoyl)lysine from octanoyl-[acyl-carrier-protein]: step 2/2. In terms of biological role, catalyzes the radical-mediated insertion of two sulfur atoms into the C-6 and C-8 positions of the octanoyl moiety bound to the lipoyl domains of lipoate-dependent enzymes, thereby converting the octanoylated domains into lipoylated derivatives. This chain is Lipoyl synthase, mitochondrial, found in Picea sitchensis (Sitka spruce).